Consider the following 127-residue polypeptide: Large ribosomal subunit protein bL12 (127 aa).

The interval 94 to 114 (VDGAPSTLKEAASKEEAEEAK) is disordered. Positions 104-114 (AASKEEAEEAK) are enriched in basic and acidic residues.

This sequence belongs to the bacterial ribosomal protein bL12 family. Homodimer. Part of the ribosomal stalk of the 50S ribosomal subunit. Forms a multimeric L10(L12)X complex, where L10 forms an elongated spine to which 2 to 4 L12 dimers bind in a sequential fashion. Binds GTP-bound translation factors.

Functionally, forms part of the ribosomal stalk which helps the ribosome interact with GTP-bound translation factors. Is thus essential for accurate translation. In Nitratidesulfovibrio vulgaris (strain ATCC 29579 / DSM 644 / CCUG 34227 / NCIMB 8303 / VKM B-1760 / Hildenborough) (Desulfovibrio vulgaris), this protein is Large ribosomal subunit protein bL12.